Reading from the N-terminus, the 709-residue chain is Ribosomal RNA large subunit methyltransferase K/L (709 aa).

The region spanning 43–154 (LAYRITLWTR…NGVITIAMNF (112 aa)) is the THUMP domain.

Belongs to the methyltransferase superfamily. RlmKL family.

The protein resides in the cytoplasm. The enzyme catalyses guanosine(2445) in 23S rRNA + S-adenosyl-L-methionine = N(2)-methylguanosine(2445) in 23S rRNA + S-adenosyl-L-homocysteine + H(+). It carries out the reaction guanosine(2069) in 23S rRNA + S-adenosyl-L-methionine = N(2)-methylguanosine(2069) in 23S rRNA + S-adenosyl-L-homocysteine + H(+). Functionally, specifically methylates the guanine in position 2445 (m2G2445) and the guanine in position 2069 (m7G2069) of 23S rRNA. The sequence is that of Ribosomal RNA large subunit methyltransferase K/L from Shewanella baltica (strain OS195).